Consider the following 389-residue polypeptide: 8-amino-7-oxononanoate synthase (389 aa).

Position 23 (R23) interacts with substrate. A pyridoxal 5'-phosphate-binding site is contributed by 114–115; sequence GY. H139 is a binding site for substrate. S185, H213, and T242 together coordinate pyridoxal 5'-phosphate. K245 bears the N6-(pyridoxal phosphate)lysine mark. Position 357 (T357) interacts with substrate.

This sequence belongs to the class-II pyridoxal-phosphate-dependent aminotransferase family. BioF subfamily. As to quaternary structure, homodimer. Pyridoxal 5'-phosphate is required as a cofactor.

It carries out the reaction 6-carboxyhexanoyl-[ACP] + L-alanine + H(+) = (8S)-8-amino-7-oxononanoate + holo-[ACP] + CO2. Its pathway is cofactor biosynthesis; biotin biosynthesis. Its function is as follows. Catalyzes the decarboxylative condensation of pimeloyl-[acyl-carrier protein] and L-alanine to produce 8-amino-7-oxononanoate (AON), [acyl-carrier protein], and carbon dioxide. This chain is 8-amino-7-oxononanoate synthase, found in Acidithiobacillus ferrooxidans (strain ATCC 23270 / DSM 14882 / CIP 104768 / NCIMB 8455) (Ferrobacillus ferrooxidans (strain ATCC 23270)).